Here is a 101-residue protein sequence, read N- to C-terminus: Chaperone modulatory protein CbpM (101 aa).

Belongs to the CbpM family.

Interacts with CbpA and inhibits both the DnaJ-like co-chaperone activity and the DNA binding activity of CbpA. Together with CbpA, modulates the activity of the DnaK chaperone system. Does not inhibit the co-chaperone activity of DnaJ. The sequence is that of Chaperone modulatory protein CbpM from Citrobacter koseri (strain ATCC BAA-895 / CDC 4225-83 / SGSC4696).